The sequence spans 169 residues: Ribosome maturation factor RimP (169 aa).

Belongs to the RimP family.

It localises to the cytoplasm. Its function is as follows. Required for maturation of 30S ribosomal subunits. This is Ribosome maturation factor RimP from Koribacter versatilis (strain Ellin345).